The sequence spans 520 residues: GMP synthase [glutamine-hydrolyzing] (520 aa).

The Glutamine amidotransferase type-1 domain maps to 13 to 205 (KIIVLDYGSQ…ALNICKAKGD (193 aa)). Residue Cys90 is the Nucleophile of the active site. Residues His179 and Glu181 contribute to the active site. A GMPS ATP-PPase domain is found at 206–395 (WSMDNFIDMQ…LGMPDHIVWR (190 aa)). 233 to 239 (SGGVDSS) is a binding site for ATP.

In terms of assembly, homodimer.

It catalyses the reaction XMP + L-glutamine + ATP + H2O = GMP + L-glutamate + AMP + diphosphate + 2 H(+). It functions in the pathway purine metabolism; GMP biosynthesis; GMP from XMP (L-Gln route): step 1/1. Catalyzes the synthesis of GMP from XMP. This is GMP synthase [glutamine-hydrolyzing] from Streptococcus pneumoniae serotype 2 (strain D39 / NCTC 7466).